We begin with the raw amino-acid sequence, 1201 residues long: DNA-directed RNA polymerase subunit beta' (1201 aa).

Zn(2+) is bound by residues Cys60, Cys62, Cys75, and Cys78. Residues Asp449, Asp451, and Asp453 each contribute to the Mg(2+) site. Positions 818, 892, 899, and 902 each coordinate Zn(2+).

Belongs to the RNA polymerase beta' chain family. In terms of assembly, the RNAP catalytic core consists of 2 alpha, 1 beta, 1 beta' and 1 omega subunit. When a sigma factor is associated with the core the holoenzyme is formed, which can initiate transcription. Mg(2+) is required as a cofactor. The cofactor is Zn(2+).

It catalyses the reaction RNA(n) + a ribonucleoside 5'-triphosphate = RNA(n+1) + diphosphate. In terms of biological role, DNA-dependent RNA polymerase catalyzes the transcription of DNA into RNA using the four ribonucleoside triphosphates as substrates. In Listeria innocua serovar 6a (strain ATCC BAA-680 / CLIP 11262), this protein is DNA-directed RNA polymerase subunit beta'.